The primary structure comprises 87 residues: Small ribosomal subunit protein uS17 (87 aa).

Belongs to the universal ribosomal protein uS17 family. As to quaternary structure, part of the 30S ribosomal subunit.

Functionally, one of the primary rRNA binding proteins, it binds specifically to the 5'-end of 16S ribosomal RNA. In Alkalilimnicola ehrlichii (strain ATCC BAA-1101 / DSM 17681 / MLHE-1), this protein is Small ribosomal subunit protein uS17.